A 304-amino-acid polypeptide reads, in one-letter code: Acetylglutamate kinase (304 aa).

Substrate-binding positions include 69–70 (GG), R91, and N202.

Belongs to the acetylglutamate kinase family. ArgB subfamily.

It is found in the cytoplasm. The catalysed reaction is N-acetyl-L-glutamate + ATP = N-acetyl-L-glutamyl 5-phosphate + ADP. It functions in the pathway amino-acid biosynthesis; L-arginine biosynthesis; N(2)-acetyl-L-ornithine from L-glutamate: step 2/4. In terms of biological role, catalyzes the ATP-dependent phosphorylation of N-acetyl-L-glutamate. This is Acetylglutamate kinase from Caulobacter vibrioides (strain ATCC 19089 / CIP 103742 / CB 15) (Caulobacter crescentus).